The chain runs to 311 residues: Aspartate carbamoyltransferase catalytic subunit (311 aa).

2 residues coordinate carbamoyl phosphate: arginine 55 and threonine 56. Lysine 85 is an L-aspartate binding site. Positions 106, 135, and 138 each coordinate carbamoyl phosphate. Arginine 168 and arginine 230 together coordinate L-aspartate. 2 residues coordinate carbamoyl phosphate: leucine 268 and proline 269.

This sequence belongs to the aspartate/ornithine carbamoyltransferase superfamily. ATCase family. In terms of assembly, heterododecamer (2C3:3R2) of six catalytic PyrB chains organized as two trimers (C3), and six regulatory PyrI chains organized as three dimers (R2).

It carries out the reaction carbamoyl phosphate + L-aspartate = N-carbamoyl-L-aspartate + phosphate + H(+). The protein operates within pyrimidine metabolism; UMP biosynthesis via de novo pathway; (S)-dihydroorotate from bicarbonate: step 2/3. Functionally, catalyzes the condensation of carbamoyl phosphate and aspartate to form carbamoyl aspartate and inorganic phosphate, the committed step in the de novo pyrimidine nucleotide biosynthesis pathway. The chain is Aspartate carbamoyltransferase catalytic subunit from Escherichia coli O139:H28 (strain E24377A / ETEC).